The chain runs to 88 residues: Antitoxin VapB3 (88 aa).

In terms of biological role, antitoxin component of a type II toxin-antitoxin (TA) system. This is Antitoxin VapB3 (vapB3) from Mycobacterium tuberculosis (strain CDC 1551 / Oshkosh).